A 239-amino-acid polypeptide reads, in one-letter code: ATP-dependent dethiobiotin synthetase BioD (239 aa).

15 to 20 contributes to the ATP binding site; the sequence is EIGKTF. Thr19 provides a ligand contact to Mg(2+). Lys40 is a catalytic residue. Residues Asp57, 118–121, and 178–179 each bind ATP; these read EGVG and NH. Mg(2+) is bound by residues Asp57 and Glu118.

Belongs to the dethiobiotin synthetase family. As to quaternary structure, homodimer. Mg(2+) is required as a cofactor.

The protein resides in the cytoplasm. It catalyses the reaction (7R,8S)-7,8-diammoniononanoate + CO2 + ATP = (4R,5S)-dethiobiotin + ADP + phosphate + 3 H(+). It participates in cofactor biosynthesis; biotin biosynthesis; biotin from 7,8-diaminononanoate: step 1/2. In terms of biological role, catalyzes a mechanistically unusual reaction, the ATP-dependent insertion of CO2 between the N7 and N8 nitrogen atoms of 7,8-diaminopelargonic acid (DAPA, also called 7,8-diammoniononanoate) to form a ureido ring. This Burkholderia cenocepacia (strain HI2424) protein is ATP-dependent dethiobiotin synthetase BioD.